The primary structure comprises 147 residues: UPF0306 protein KPK_0562 (147 aa).

Belongs to the UPF0306 family.

In Klebsiella pneumoniae (strain 342), this protein is UPF0306 protein KPK_0562.